The following is a 255-amino-acid chain: MQQEEIIEGYYGASKGLKKSGIYAKLDFLQSATGLILALFMIAHMFLVSSILISDEAMYKVAKFFEGSLFLKAGEPAIVSVVAAGVILILVAHAFLALRKFPINYRQYKVFKTHKHLMKHGDTSLWFIQALTGFAMFFLASIHLFVMLTEPESIGPHGSSYRFVTQNFWLLYIFLLFAVELHGSIGLYRLAIKWGWFKNVSIQGLRKIKWAMSVFFIVLGLCTYGAYIKKGLENKDNGIKTMQEAIEADGKFHKE.

A run of 5 helical transmembrane segments spans residues 33–53 (TGLI…SILI), 78–98 (IVSV…FLAL), 126–146 (WFIQ…HLFV), 168–188 (FWLL…IGLY), and 208–228 (IKWA…GAYI). 4 residues coordinate heme b: His44, His93, His143, and His182.

The protein belongs to the diheme cytochrome b FrdC family. Part of an enzyme complex containing three subunits: a flavoprotein (frdA), an iron-sulfur protein (frdB), and diheme cytochrome b (frdC). Heme b serves as cofactor.

The protein resides in the cell inner membrane. The fumarate reductase enzyme complex is required for fumarate respiration. This subunit anchors the complex in the membrane and binds a diheme cytochrome b. In Helicobacter pylori (strain J99 / ATCC 700824) (Campylobacter pylori J99), this protein is Fumarate reductase cytochrome b subunit (frdC).